Reading from the N-terminus, the 137-residue chain is TSC22 domain family protein 3 (137 aa).

The segment at 1–60 is AP1-binding; that stretch reads MNTEMYQTPMEVAVYQLHNFSISFFSSLLGGDVVSVKLDNSASGASVVALDNKIEQAMDL. Asn40 and Val73 each carry phosphoserine. A leucine-zipper region spans residues 76–97; sequence LKEQIRELLEKNSQLERENTLL. The disordered stretch occupies residues 101 to 137; the sequence is ASPEQLEKFQSRLSPEEPAPEAPETPETPEAPGGSAV. Ser102 bears the Phosphoserine mark. Thr125 and Thr128 each carry phosphothreonine. Residues 128–137 show a composition bias toward low complexity; the sequence is TPEAPGGSAV.

Belongs to the TSC-22/Dip/Bun family. In terms of assembly, can form homodimers, however it is likely to function as a monomer. Interacts with NFKB1. Interacts (via N-terminus) with JUN and FOS; these interactions inhibit the binding of active AP1 to its target DNA. Interacts with MYOD1. Interacts with HDAC1; this interaction affects HDAC1 activity on MYOG promoter and thus inhibits MYOD1 transcriptional activity. As to quaternary structure, interacts with MYOD1. Expressed in T-cells. Expression inversely correlates with T-cell activation, being higher in resting cells and lower in cells activated by TCR/CD3 triggering (at protein level). Constitutively expressed in lung, intestine, kidney and liver, most probably by resident cells from the macrophage lineage. Expressed in thymus, lymph nodes, bone marrow, spleen, lung and skeletal muscle. In terms of tissue distribution, expressed in spleen and skeletal muscle (at protein level). Expressed in the cortex, medulla and papilla of the kidney. As to expression, expressed in the cortex, medulla and papilla of the kidney. Expressed in spleen and skeletal muscle (at protein level).

The protein localises to the cytoplasm. It is found in the nucleus. Functionally, protects T-cells from IL2 deprivation-induced apoptosis through the inhibition of FOXO3A transcriptional activity that leads to the down-regulation of the pro-apoptotic factor BCL2L11. In macrophages, plays a role in the anti-inflammatory and immunosuppressive effects of glucocorticoids and IL10. In T-cells, inhibits anti-CD3-induced NFKB1 nuclear translocation and thereby NFKB1 DNA-binding activities. In vitro, suppresses AP-1 transcription factor complex DNA-binding activities. In terms of biological role, inhibits myogenic differentiation and mediates anti-myogenic effects of glucocorticoids by binding and regulating MYOD1 and HDAC1 transcriptional activity resulting in reduced expression of MYOG. This is TSC22 domain family protein 3 from Mus musculus (Mouse).